Consider the following 343-residue polypeptide: Protein RecA (343 aa).

Position 65-72 (65-72 (GPESSGKT)) interacts with ATP.

The protein belongs to the RecA family.

The protein resides in the cytoplasm. In terms of biological role, can catalyze the hydrolysis of ATP in the presence of single-stranded DNA, the ATP-dependent uptake of single-stranded DNA by duplex DNA, and the ATP-dependent hybridization of homologous single-stranded DNAs. It interacts with LexA causing its activation and leading to its autocatalytic cleavage. The protein is Protein RecA of Pseudoalteromonas atlantica (strain T6c / ATCC BAA-1087).